A 367-amino-acid chain; its full sequence is Cell-death-related nuclease 7 (367 aa).

Positions 1–18 (MRLYFVLIFSVIFTTGNG) are cleaved as a signal peptide. N-linked (GlcNAc...) asparagine glycosylation is present at N253.

The protein belongs to the DNase II family.

In Caenorhabditis elegans, this protein is Cell-death-related nuclease 7 (crn-7).